We begin with the raw amino-acid sequence, 78 residues long: Longicornsin (78 aa).

The first 22 residues, 1-22 (MAESTTTCFLLLVTGYVTAVMS), serve as a signal peptide directing secretion. Residues 23–29 (EEAHLRS) constitute a propeptide that is removed on maturation. Cystine bridges form between C35–C58, C43–C63, and C47–C65.

In terms of tissue distribution, salivary glands (at protein level).

The protein resides in the secreted. In terms of biological role, has antibacterial activity against the Gram-positive bacteria S.aureus ATCC2592 (MIC=0.8 ug/ml), S.aureus 6A (MIC=0.8 ug/ml) and S.aureus 15A (MIC=1.6 ug/ml), and against the Gram-negative bacteria E.coli ATCC 25922 (MIC=3.2 ug/ml), E.coli 23A (MIC=6.4 ug/ml), E.coli 27A (MIC=6.4 ug/ml), P.aeruginosa 3A (MIC=3.2 ug/ml), P.aeruginosa 7A (MIC=0.8 ug/ml) and H.pylori NCTC11637 (MIC=6.4 ug/ml). Has antifungal activity against C.albidus ATCC2002 (MIC=25.6 ug/ml). Very low hemolytic activity against rabbit erythrocytes. The sequence is that of Longicornsin from Haemaphysalis longicornis (Bush tick).